We begin with the raw amino-acid sequence, 804 residues long: Exo-1,4-beta-xylosidase xlnD (804 aa).

An N-terminal signal peptide occupies residues M1 to A26. N-linked (GlcNAc...) asparagine glycans are attached at residues N29, N124, N148, N242, and N251. Residue D315 is part of the active site. 9 N-linked (GlcNAc...) asparagine glycosylation sites follow: N357, N390, N413, N444, N455, N573, N665, N696, and N718.

Belongs to the glycosyl hydrolase 3 family.

It localises to the secreted. The catalysed reaction is Hydrolysis of (1-&gt;4)-beta-D-xylans, to remove successive D-xylose residues from the non-reducing termini.. It functions in the pathway glycan degradation; xylan degradation. In terms of biological role, xylan 1,4-beta-xylosidase involved in the hydrolysis of xylan, a major structural heterogeneous polysaccharide found in plant biomass representing the second most abundant polysaccharide in the biosphere, after cellulose. In Aspergillus awamori (Black koji mold), this protein is Exo-1,4-beta-xylosidase xlnD (xlnD).